Consider the following 365-residue polypeptide: Homeobox protein Nkx-6.1 (365 aa).

Residues 35 to 136 are disordered; the sequence is LYPAAYPPLP…SSSSASATSA (102 aa). Composition is skewed to low complexity over residues 48 to 59, 69 to 92, and 110 to 136; these read PSSSSSSSSSSS, PGGL…QLSA, and ASGA…ATSA. The segment at 102 to 269 is repressor domain; that stretch reads LSRPSMPVAS…KYLAGPERAR (168 aa). Asymmetric dimethylarginine is present on arginine 190. A DNA-binding region (homeobox) is located at residues 237 to 296; sequence RKHTRPTFSGQQIFALEKTFEQTKYLAGPERARLAYSLGMTESQVKVWFQNRRTKWRKKH. The disordered stretch occupies residues 295–365; it reads KHAAEMATAK…LHASEAEGSS (71 aa). Basic and acidic residues predominate over residues 305–318; it reads KKQDSETERLKGTS. The tract at residues 307-365 is involved in DNA-binding; that stretch reads QDSETERLKGTSENEEDDDDYNKPLDPNSDDEKITQLLKKHKSSGGSLLLHASEAEGSS.

As to expression, pancreatic beta cells.

Its subcellular location is the nucleus. In terms of biological role, transcription factor which binds to specific A/T-rich DNA sequences in the promoter regions of a number of genes. Involved in the development of insulin-producing beta cells in the islets of Langerhans at the secondary transition. Together with NKX2-2 and IRX3 acts to restrict the generation of motor neurons to the appropriate region of the neural tube. Belongs to the class II proteins of neuronal progenitor factors, which are induced by SHH signals. The chain is Homeobox protein Nkx-6.1 (Nkx6-1) from Rattus norvegicus (Rat).